We begin with the raw amino-acid sequence, 69 residues long: Proteinase inhibitor (69 aa).

Serine 1 is modified (N-acetylserine). A disulfide bond links cysteine 4 and cysteine 49.

In terms of biological role, in vitro, strong inhibitor of bovine beta-trypsin, weak inhibitor of alpha-chymotrypsin, subtilisin BPN', subtilisin Carlsberg and cathepsin G. The polypeptide is Proteinase inhibitor (Linum usitatissimum (Flax)).